The primary structure comprises 247 residues: ATP synthase subunit a, chloroplastic (247 aa).

5 helical membrane-spanning segments follow: residues 38 to 58 (QVLI…VIAV), 95 to 115 (VPFI…GALL), 134 to 154 (INTT…AGLS), 199 to 219 (LVVV…VMFL), and 220 to 240 (GLFT…AYIG).

It belongs to the ATPase A chain family. F-type ATPases have 2 components, CF(1) - the catalytic core - and CF(0) - the membrane proton channel. CF(1) has five subunits: alpha(3), beta(3), gamma(1), delta(1), epsilon(1). CF(0) has four main subunits: a, b, b' and c.

Its subcellular location is the plastid. It localises to the chloroplast thylakoid membrane. Functionally, key component of the proton channel; it plays a direct role in the translocation of protons across the membrane. The sequence is that of ATP synthase subunit a, chloroplastic from Agrostis stolonifera (Creeping bentgrass).